The sequence spans 258 residues: Short-chain dehydrogenase/reductase aba4 (258 aa).

3 residues coordinate NADP(+): I20, D66, and K130. Active-site proton donor residues include S146 and Y160. Positions 160, 164, 193, and 195 each coordinate NADP(+). K164 (lowers pKa of active site Tyr) is an active-site residue.

It belongs to the short-chain dehydrogenases/reductases (SDR) family.

The protein operates within hormone biosynthesis. Functionally, short-chain dehydrogenase/reductase; part of the gene cluster that mediates the biosynthesis of abscisic acid (ABA), a phytohormone that acts antagonistically toward salicylic acid (SA), jasmonic acid (JA) and ethylene (ETH) signaling, to impede plant defense responses. The first step of the pathway catalyzes the reaction from farnesyl diphosphate to alpha-ionylideneethane performed by the alpha-ionylideneethane synthase aba3 via a three-step reaction mechanism involving 2 neutral intermediates, beta-farnesene and allofarnesene. The cytochrome P450 monooxygenase aba1 might then be involved in the conversion of alpha-ionylideneethane to alpha-ionylideneacetic acid. Alpha-ionylideneacetic acid is further converted to abscisic acid in 2 steps involving the cytochrome P450 monooxygenase aba2 and the short-chain dehydrogenase/reductase aba4, via the intermediates 1'-deoxy-ABA or 1',4'-trans-diol-ABA, depending on the order of action of these 2 enzymes. Aba2 is responsible for the hydroxylation of carbon atom C-1' and aba4 might be involved in the oxidation of the C-4' carbon atom. The polypeptide is Short-chain dehydrogenase/reductase aba4 (Botryotinia fuckeliana (strain B05.10) (Noble rot fungus)).